Here is a 210-residue protein sequence, read N- to C-terminus: Orotate phosphoribosyltransferase (210 aa).

5-phospho-alpha-D-ribose 1-diphosphate contacts are provided by residues Arg97, Lys101, His103, and 123-131 (EDLISTGGS). Orotate is bound at residue Ser127.

The protein belongs to the purine/pyrimidine phosphoribosyltransferase family. PyrE subfamily. In terms of assembly, homodimer. It depends on Mg(2+) as a cofactor.

The catalysed reaction is orotidine 5'-phosphate + diphosphate = orotate + 5-phospho-alpha-D-ribose 1-diphosphate. It functions in the pathway pyrimidine metabolism; UMP biosynthesis via de novo pathway; UMP from orotate: step 1/2. Catalyzes the transfer of a ribosyl phosphate group from 5-phosphoribose 1-diphosphate to orotate, leading to the formation of orotidine monophosphate (OMP). The chain is Orotate phosphoribosyltransferase from Porphyromonas gingivalis (strain ATCC BAA-308 / W83).